A 277-amino-acid polypeptide reads, in one-letter code: Large ribosomal subunit protein uL2 (277 aa).

The disordered stretch occupies residues 227–277 (VMNPVDHPHGGGEGRTSGGRHPVTPWGVPTKGKKTRSKTKASDRLIMRRRK). Over residues 266–277 (KASDRLIMRRRK) the composition is skewed to basic and acidic residues.

Belongs to the universal ribosomal protein uL2 family. Part of the 50S ribosomal subunit. Forms a bridge to the 30S subunit in the 70S ribosome.

Functionally, one of the primary rRNA binding proteins. Required for association of the 30S and 50S subunits to form the 70S ribosome, for tRNA binding and peptide bond formation. It has been suggested to have peptidyltransferase activity; this is somewhat controversial. Makes several contacts with the 16S rRNA in the 70S ribosome. This is Large ribosomal subunit protein uL2 from Magnetococcus marinus (strain ATCC BAA-1437 / JCM 17883 / MC-1).